A 286-amino-acid polypeptide reads, in one-letter code: ATP phosphoribosyltransferase (286 aa).

Belongs to the ATP phosphoribosyltransferase family. Long subfamily. Requires Mg(2+) as cofactor.

It is found in the cytoplasm. The enzyme catalyses 1-(5-phospho-beta-D-ribosyl)-ATP + diphosphate = 5-phospho-alpha-D-ribose 1-diphosphate + ATP. The protein operates within amino-acid biosynthesis; L-histidine biosynthesis; L-histidine from 5-phospho-alpha-D-ribose 1-diphosphate: step 1/9. Feedback inhibited by histidine. Functionally, catalyzes the condensation of ATP and 5-phosphoribose 1-diphosphate to form N'-(5'-phosphoribosyl)-ATP (PR-ATP). Has a crucial role in the pathway because the rate of histidine biosynthesis seems to be controlled primarily by regulation of HisG enzymatic activity. The sequence is that of ATP phosphoribosyltransferase from Arthrobacter sp. (strain FB24).